A 162-amino-acid chain; its full sequence is Balbiani ring protein 2 (162 aa).

The tract at residues 1–31 (CDDAMRKTESDKCTNIGGKFDPSTCKCTPET) is last constant region. The segment at 32 to 51 (VTEGPTTCLESSESDEVTTK) is last Cys-1 repeat. The tract at residues 52 to 162 (KPCDCTCAPD…VKGLEDILNS (111 aa)) is unique region.

Salivary gland.

It localises to the secreted. Its function is as follows. Used by the larvae to construct a supramolecular structure, the larval tube. The protein is Balbiani ring protein 2 (BR2) of Chironomus pallidivittatus (Midge).